We begin with the raw amino-acid sequence, 314 residues long: NAC domain-containing protein 10 (314 aa).

The segment covering 18-39 (VSNTDHPSVQLKDQSQSCVTSR) has biased composition (polar residues). Disordered regions lie at residues 18 to 48 (VSNTDHPSVQLKDQSQSCVTSRPDSKISAET) and 150 to 182 (YTTGTRKRRKVSTDEEGHETRWHKTGKTRPVLS). Residues 77 to 236 (LPAGVKFDPS…EPVLSKVFYQ (160 aa)) form the NAC domain. Positions 160 to 171 (VSTDEEGHETRW) are enriched in basic and acidic residues. A DNA-binding region spans residues 187–242 (TGFKKILVLYTNYGRQKKPEKTNWVMHQYHLGSSEDEKDGEPVLSKVFYQTQPRQC).

Expressed in protoxylem and elongating interfascicular fiber cells of elongating internodes, developing metaxylem cells and interfascicular fibers of non-elongating internodes and developing secondary xylem of roots.

It is found in the nucleus. Functionally, transcriptional activator that plays a regulatory role in the development of secondary cell wall fibers. Is a direct target of SND1. The polypeptide is NAC domain-containing protein 10 (Arabidopsis thaliana (Mouse-ear cress)).